A 542-amino-acid chain; its full sequence is MDNGTDSSTSKFVPEYRRTNFKNKGRFSADELRRRRDTQQVELRKAKRDEALAKRRNFIPPTDGADSDEEDESSVSADQQFYSQLQQELPQMTQQLNSDDMQEQLSATVKFRQILSREHRPPIDVVIQAGVVPRLVEFMRENQPEMLQLEAAWALTNIASGTSAQTKVVVDADAVPLFIQLLYTGSVEVKEQAIWALGNVAGDSTDYRDYVLQCNAMEPILGLFNSNKPSLIRTATWTLSNLCRGKKPQPDWSVVSQALPTLAKLIYSMDTETLVDACWAISYLSDGPQEAIQAVIDVRIPKRLVELLSHESTLVQTPALRAVGNIVTGNDLQTQVVINAGVLPALRLLLSSPKENIKKEACWTISNITAGNTEQIQAVIDANLIPPLVKLLEVAEYKTKKEACWAISNASSGGLQRPDIIRYLVSQGCIKPLCDLLEIADNRIIEVTLDALENILKMGEADKEARGLNINENADFIEKAGGMEKIFNCQQNENDKIYEKAYKIIETYFGEEEDAVDETMAPQNAGNTFGFGSNVNQQFNFN.

Residue M1 is modified to N-acetylmethionine. Residues M1–K11 are compositionally biased toward polar residues. Residues M1–A65 enclose the IBB domain. The interval M1 to A77 is disordered. The span at F27 to A53 shows a compositional bias: basic and acidic residues. The ARM 1; truncated repeat unit spans residues L89 to P122. ARM repeat units lie at residues I123–T162, S163–S204, T205–D251, W252–P288, Q289–N330, D331–N372, T373–R417, and P418–N471. The tract at residues D209–Q335 is NLS binding site 1. Residues D419 to I505 are NLS binding site 2. Residues E472–Y508 form an ARM 10; atypical repeat.

Belongs to the importin alpha family. In terms of assembly, forms a complex with an importin beta subunit. In the nucleus, interacts with NUP2 which accelerate release of NLSs, NUP2 is subsequently displaced by CSE1:RanGTP which mediates re-export and recycling. Interacts with HEH2, SHE2, and STS1.

Its subcellular location is the cytoplasm. It localises to the perinuclear region. Functionally, functions in nuclear protein import as an adapter protein for importin beta nuclear receptors. Binds specifically and directly to substrates containing either a simple or bipartite NLS motif. Promotes docking of import substrates to the nuclear envelope. Together with importin beta KAP95, mediates nuclear import of transcription factor GCN4. Together with tethering factor STS1, targets the proteasome to the nucleus. The polypeptide is Importin subunit alpha (SRP1) (Saccharomyces cerevisiae (strain ATCC 204508 / S288c) (Baker's yeast)).